A 249-amino-acid polypeptide reads, in one-letter code: Uridylate kinase (249 aa).

15–18 (KLSG) serves as a coordination point for ATP. The interval 23-28 (GEEGFG) is involved in allosteric activation by GTP. UMP is bound at residue Gly57. The ATP site is built by Gly58 and Arg62. UMP-binding positions include Asp77 and 138-145 (TGNPFFTT). ATP-binding residues include Thr165, Phe171, and Asp174.

It belongs to the UMP kinase family. Homohexamer.

It is found in the cytoplasm. It catalyses the reaction UMP + ATP = UDP + ADP. It functions in the pathway pyrimidine metabolism; CTP biosynthesis via de novo pathway; UDP from UMP (UMPK route): step 1/1. Allosterically activated by GTP. Inhibited by UTP. Catalyzes the reversible phosphorylation of UMP to UDP. This is Uridylate kinase from Psychromonas ingrahamii (strain DSM 17664 / CCUG 51855 / 37).